We begin with the raw amino-acid sequence, 1112 residues long: Cytosolic carboxypeptidase 4 (1112 aa).

The tract at residues 291 to 345 is disordered; sequence TTEPPHDLPEEDFEDDGDDEVDKDSDTEDGKVEDDDLETDVNKLSSKPGLDRPEE. Positions 299–329 are enriched in acidic residues; that stretch reads PEEDFEDDGDDEVDKDSDTEDGKVEDDDLET. The Peptidase M14 domain maps to 732 to 1022; that stretch reads YPYTYTALMT…HPVDGLQGLQ (291 aa). The Zn(2+) site is built by His804, Glu807, and His901. Glu986 serves as the catalytic Proton donor/acceptor.

This sequence belongs to the peptidase M14 family. In terms of assembly, interacts with MYLK. Interacts with TCF4. The cofactor is Zn(2+). Expressed in corneal endothelium.

It is found in the cytoplasm. Its subcellular location is the cytosol. The enzyme catalyses (L-glutamyl)(n+1)-gamma-L-glutamyl-L-glutamyl-[protein] + H2O = (L-glutamyl)(n)-gamma-L-glutamyl-L-glutamyl-[protein] + L-glutamate. It carries out the reaction C-terminal L-alpha-aminoacyl-L-glutamyl-L-glutamyl-[tubulin] + H2O = C-terminal L-alpha-aminoacyl-L-glutamyl-[tubulin] + L-glutamate. In terms of biological role, metallocarboxypeptidase that mediates deglutamylation of tubulin and non-tubulin target proteins. Catalyzes the removal of polyglutamate side chains present on the gamma-carboxyl group of glutamate residues within the C-terminal tail of tubulin protein. Specifically cleaves tubulin long-side-chains, while it is not able to remove the branching point glutamate. Also catalyzes the removal of polyglutamate residues from the carboxy-terminus of non-tubulin proteins such as MYLK. The protein is Cytosolic carboxypeptidase 4 of Homo sapiens (Human).